Consider the following 552-residue polypeptide: Probable inorganic phosphate transporter 1-10 (552 aa).

Residues 1-22 (MAPIGVLTALDQARTQYYHFKA) lie on the Cytoplasmic side of the membrane. The helical transmembrane segment at 23-43 (IVIAGMGLFTDSYDLFCIAPV) threads the bilayer. Over 44 to 68 (MKIVGRVYYSDGGARPGVTPPAVVS) the chain is Extracellular. Residues 69–89 (ATVGVALLGAVIGNVVFGALG) traverse the membrane as a helical segment. Over 90–96 (DRVGRRR) the chain is Cytoplasmic. A helical transmembrane segment spans residues 97-117 (VYGACLLLMVCSSVGSGFSVC). The Extracellular segment spans residues 118-123 (RTRRCA). The helical transmembrane segment at 124-144 (LASLCFFRFLLGVGVGGDYPL) threads the bilayer. Over 145–158 (SATIMSEFANRRTR) the chain is Cytoplasmic. The chain crosses the membrane as a helical span at residues 159-179 (GAFIAAVFSMQGFGILASSAV). At 180–203 (TMAVAAAFDHYTGYPAPLDTPECA) the chain is on the extracellular side. Residues 204 to 224 (DLAWRIILMAGAVPAALTYYW) traverse the membrane as a helical segment. Residues 225 to 295 (RMSMPETARY…RRFVRQHGRD (71 aa)) lie on the Cytoplasmic side of the membrane. A helical membrane pass occupies residues 296-316 (LFACAAAWFLLDIPYYSSTLF). At 317–342 (QSQIYRPLFPAPGLINAFQEAFNVAK) the chain is on the extracellular side. The helical transmembrane segment at 343-363 (FQAVIAVASTIPGYFVAVLLI) threads the bilayer. Residues 364-369 (DRVGRR) lie on the Cytoplasmic side of the membrane. Residues 370-390 (CLQMAGFLLMAVFLFALAGPY) traverse the membrane as a helical segment. The Extracellular portion of the chain corresponds to 391–397 (DGYWRDH). The helical transmembrane segment at 398–418 (GAHAGYIVLYSLTFFSANLGP) threads the bilayer. The Cytoplasmic portion of the chain corresponds to 419-439 (NTTTFILPAELFPARFRSTCH). A helical membrane pass occupies residues 440–460 (GLSGAAGKLGALVGSIGFLWA). Residues 461 to 473 (SQQKDGAAAGHLP) are Extracellular-facing. A helical transmembrane segment spans residues 474–494 (GIGMMYALFVLGGICLLGLAL). Residues 495–552 (TYVFTPETMMRSLEENESDRAQTQVGDGGSDTEAAKSPASMASSHLSMSPILPARVSV) lie on the Cytoplasmic side of the membrane. The tract at residues 507 to 540 (LEENESDRAQTQVGDGGSDTEAAKSPASMASSHL) is disordered.

Belongs to the major facilitator superfamily. Phosphate:H(+) symporter (TC 2.A.1.9) family. As to expression, expressed at low levels in roots.

The protein localises to the membrane. Its function is as follows. High-affinity transporter for external inorganic phosphate. The protein is Probable inorganic phosphate transporter 1-10 (PHT1-10) of Oryza sativa subsp. japonica (Rice).